Consider the following 420-residue polypeptide: Probable ABC transporter-binding protein DR_1438 (420 aa).

Positions 1-24 (MKKFAAVLGLTVAFAAASQAHAVT) are cleaved as a signal peptide.

Belongs to the bacterial solute-binding protein 1 family.

Its function is as follows. Probably part of a binding-protein-dependent transport system. The polypeptide is Probable ABC transporter-binding protein DR_1438 (Deinococcus radiodurans (strain ATCC 13939 / DSM 20539 / JCM 16871 / CCUG 27074 / LMG 4051 / NBRC 15346 / NCIMB 9279 / VKM B-1422 / R1)).